We begin with the raw amino-acid sequence, 120 residues long: Large ribosomal subunit protein uL18 (120 aa).

The interval 1–25 is disordered; that stretch reads MKQTRTAARQSRHQRIRRKVKGTSD. The segment covering 10–21 has biased composition (basic residues); sequence QSRHQRIRRKVK.

It belongs to the universal ribosomal protein uL18 family. In terms of assembly, part of the 50S ribosomal subunit; part of the 5S rRNA/L5/L18/L25 subcomplex. Contacts the 5S and 23S rRNAs.

This is one of the proteins that bind and probably mediate the attachment of the 5S RNA into the large ribosomal subunit, where it forms part of the central protuberance. This Thermosynechococcus vestitus (strain NIES-2133 / IAM M-273 / BP-1) protein is Large ribosomal subunit protein uL18.